A 344-amino-acid chain; its full sequence is MKIGFVGATGYGGTELVRILSHHPHAEECILYQTSGEGNVYSEGYPHLTGLADLKPIDMNTIKHEIDIMFLAAPPGVSSELTPKLADAWVTVIDLSGDLRIKEPAEYEKWYKRTAAPKAVIQEAVYGLAELNQLAIQQAKLIANPGCFPTAVLLGLAPLAKKKLLDESFVIVDAKTGVSGAGRKASMGTHFSELNDNFKIYKVNEHQHTPEIEQALNEWQPGLGPITFSAHLVPMTRGIMATMYTRLTCDLTADDLHDLYSEFYQDSYFVRVRPKGQYPQTKEVYGSNFCDIGVTLDERTNRVTIVSVIDNLMKGAAGQAVQNFNLMNGWDEETGLTIITPIYA.

Cysteine 147 is a catalytic residue.

The protein belongs to the NAGSA dehydrogenase family. Type 1 subfamily.

The protein resides in the cytoplasm. The catalysed reaction is N-acetyl-L-glutamate 5-semialdehyde + phosphate + NADP(+) = N-acetyl-L-glutamyl 5-phosphate + NADPH + H(+). It participates in amino-acid biosynthesis; L-arginine biosynthesis; N(2)-acetyl-L-ornithine from L-glutamate: step 3/4. Functionally, catalyzes the NADPH-dependent reduction of N-acetyl-5-glutamyl phosphate to yield N-acetyl-L-glutamate 5-semialdehyde. The chain is N-acetyl-gamma-glutamyl-phosphate reductase from Bacillus amyloliquefaciens (Bacillus velezensis).